The primary structure comprises 174 residues: Large ribosomal subunit protein uL10 (174 aa).

This sequence belongs to the universal ribosomal protein uL10 family. As to quaternary structure, part of the ribosomal stalk of the 50S ribosomal subunit. The N-terminus interacts with L11 and the large rRNA to form the base of the stalk. The C-terminus forms an elongated spine to which L12 dimers bind in a sequential fashion forming a multimeric L10(L12)X complex.

Its function is as follows. Forms part of the ribosomal stalk, playing a central role in the interaction of the ribosome with GTP-bound translation factors. The sequence is that of Large ribosomal subunit protein uL10 from Anaeromyxobacter sp. (strain Fw109-5).